We begin with the raw amino-acid sequence, 181 residues long: Mytilin-1 (181 aa).

The first 22 residues, M1–T22, serve as a signal peptide directing secretion.

Component of the organic matrix of calcified shell layers like nacre and prisms.

It localises to the secreted. The protein is Mytilin-1 of Mytilus galloprovincialis (Mediterranean mussel).